Here is a 443-residue protein sequence, read N- to C-terminus: MHNTLFRTALLAAALGSFSHTASAEGVMVHLFEWKFNDIANECETVLGPKGFGGVQVSPPAEHKQGSQVWWTVYQPVSYKNFNSFGGCEAELRSMIARCNAAGVKVYADAVFNHMASGSGTATGGGSYNSGQYQYPQFGYNDFHHSGDITNYGDSNNVWNGALYGLPDLNTGSSYVQDQIATYMKTLLGWGVAGFRIDAAKHMAPADVKAILDKAGSPRAYLEVIGAGGESPDIQPGRYTYIDTVTEFKYGTDLAANFNGQIKNLKTLGESWGLLPSNKAFVFVDNHDPERAHGGGGMLTFMQGARYDLANTFMLAWPYGWKQVMSAYRFENMGTYETDKGAPGSTPCTDSQWNCEQRRPTIMNMVLFRNRTEGQPVSNWWDNGNNQIAFSRGTRASSPSTTRAARWWPRCRRSRPASTATSWGAMTTAAAVMSPSTAAARPA.

The N-terminal stretch at methionine 1–alanine 24 is a signal peptide. 2 residues coordinate substrate: histidine 114 and arginine 196. Aspartate 198 acts as the Nucleophile in catalysis. Lysine 201–histidine 202 contributes to the substrate binding site. The active-site Proton donor is the glutamate 223. Substrate-binding residues include glycine 228 and histidine 287.

The protein belongs to the glycosyl hydrolase 13 family.

It is found in the secreted. The catalysed reaction is Endohydrolysis of (1-&gt;4)-alpha-D-glucosidic linkages in polysaccharides containing three or more (1-&gt;4)-alpha-linked D-glucose units.. The chain is Alpha-amylase (amyA) from Aeromonas hydrophila.